A 98-amino-acid polypeptide reads, in one-letter code: Feather beta keratin (98 aa).

Serine 2 carries the N-acetylserine modification.

This sequence belongs to the avian keratin family. As to quaternary structure, the avian keratins (F-ker, S-ker, C-ker and B-ker) are a complex mixture of very similar polypeptides.

This is Feather beta keratin from Cathartes aura (Turkey vulture).